The primary structure comprises 185 residues: Nodulin-20 (185 aa).

A signal peptide spans 1-17 (MRVVLITLFLFIGAAVA).

The protein belongs to the nodulin 20 family.

It is found in the symbiosome. Its subcellular location is the peribacteroid membrane. It localises to the peribacteroid space. The sequence is that of Nodulin-20 from Glycine max (Soybean).